The chain runs to 2184 residues: Chromodomain-helicase-DNA-binding protein 8 (2184 aa).

2 disordered regions span residues 379-399 and 419-527; these read VKTS…KQEK and IPRV…KRKK. Basic and acidic residues predominate over residues 387–399; the sequence is ESRKLDSQKKQEK. The segment covering 425–437 has biased composition (acidic residues); the sequence is EDELPSVNPEDDD. Over residues 448–459 the composition is skewed to basic and acidic residues; it reads GETSDRSKDEKP. Residues 516-527 are compositionally biased toward basic residues; that stretch reads KRRSNRQVKRKK. Chromo domains are found at residues 586–653 and 668–734; these read AIVD…TQMQ and VEVD…RVAR. The region spanning 767-941 is the Helicase ATP-binding domain; it reads LFNWYNRQNC…FSLLHFLEPT (175 aa). Position 780–787 (780–787) interacts with ATP; it reads DEMGLGKT. The DEAH box signature appears at 892-895; sequence DEAH. The region spanning 1081–1252 is the Helicase C-terminal domain; sequence LIDKLLPKLR…FTKKEIEDLL (172 aa). Disordered stretches follow at residues 1907 to 1989 and 2039 to 2076; these read GISG…EESR and WSSP…PAPD. 2 stretches are compositionally biased toward low complexity: residues 1912–1961 and 2040–2054; these read SRPS…SNSE and SSPR…DSPD.

The protein belongs to the SNF2/RAD54 helicase family. CHD8 subfamily. Component of some MLL1/MLL complex.

It localises to the nucleus. The enzyme catalyses ATP + H2O = ADP + phosphate + H(+). ATP-dependent chromatin-remodeling factor, it slides nucleosomes along DNA; nucleosome sliding requires ATP. Acts as a transcription repressor by remodeling chromatin structure and recruiting histone H1 to target genes. Suppresses p53/tp53-mediated apoptosis by recruiting histone H1 and preventing p53/tp53 transactivation activity. Acts as a negative regulator of Wnt signaling pathway by regulating beta-catenin (ctnnb1) activity. Negatively regulates ctnnb1-targeted gene expression by being recruited specifically to the promoter regions of several ctnnb1 responsive genes. May also act as a transcription activator by participating in efficient U6 RNA polymerase III transcription. The chain is Chromodomain-helicase-DNA-binding protein 8 from Xenopus tropicalis (Western clawed frog).